The chain runs to 271 residues: ATP synthase subunit a (271 aa).

5 helical membrane-spanning segments follow: residues 40–60 (TINI…LVLF), 100–120 (LIAP…LMDL), 146–166 (DVNV…FYNI), 220–240 (LIFI…LNVP), and 242–262 (AIFH…LTIV).

Belongs to the ATPase A chain family. As to quaternary structure, F-type ATPases have 2 components, CF(1) - the catalytic core - and CF(0) - the membrane proton channel. CF(1) has five subunits: alpha(3), beta(3), gamma(1), delta(1), epsilon(1). CF(0) has three main subunits: a(1), b(2) and c(9-12). The alpha and beta chains form an alternating ring which encloses part of the gamma chain. CF(1) is attached to CF(0) by a central stalk formed by the gamma and epsilon chains, while a peripheral stalk is formed by the delta and b chains.

The protein resides in the cell inner membrane. In terms of biological role, key component of the proton channel; it plays a direct role in the translocation of protons across the membrane. The chain is ATP synthase subunit a from Shigella flexneri.